The sequence spans 237 residues: Putative HTH-type transcriptional regulator ycf28 (237 aa).

Residues 155-228 (KSITNRLISL…KKKVIIHDPI (74 aa)) form the HTH crp-type domain. Positions 188 to 207 (HKVLAQIIGSNRVSITRIIS) form a DNA-binding region, H-T-H motif.

Its subcellular location is the plastid. The protein localises to the chloroplast. The protein is Putative HTH-type transcriptional regulator ycf28 (ycf28) of Porphyra purpurea (Red seaweed).